The following is a 564-amino-acid chain: Eukaryotic translation initiation factor 3 subunit L (564 aa).

Position 2 is an N-acetylserine (Ser-2). The 207-residue stretch at 331 to 537 (DAIRVFANIL…IHIADTKVAR (207 aa)) folds into the PCI domain. Residues Lys-465 and Lys-549 each carry the N6-acetyllysine modification.

It belongs to the eIF-3 subunit L family. As to quaternary structure, component of the eukaryotic translation initiation factor 3 (eIF-3) complex, which is composed of 13 subunits: EIF3A, EIF3B, EIF3C, EIF3D, EIF3E, EIF3F, EIF3G, EIF3H, EIF3I, EIF3J, EIF3K, EIF3L and EIF3M. The eIF-3 complex appears to include 3 stable modules: module A is composed of EIF3A, EIF3B, EIF3G and EIF3I; module B is composed of EIF3F, EIF3H, and EIF3M; and module C is composed of EIF3C, EIF3D, EIF3E, EIF3K and EIF3L. EIF3C of module C binds EIF3B of module A and EIF3H of module B, thereby linking the three modules. EIF3J is a labile subunit that binds to the eIF-3 complex via EIF3B. The eIF-3 complex may interact with RPS6KB1 under conditions of nutrient depletion. Mitogenic stimulation may lead to binding and activation of a complex composed of MTOR and RPTOR, leading to phosphorylation and release of RPS6KB1 and binding of EIF4B to eIF-3. Interacts with RRN3.

The protein localises to the cytoplasm. In terms of biological role, component of the eukaryotic translation initiation factor 3 (eIF-3) complex, which is required for several steps in the initiation of protein synthesis. The eIF-3 complex associates with the 40S ribosome and facilitates the recruitment of eIF-1, eIF-1A, eIF-2:GTP:methionyl-tRNAi and eIF-5 to form the 43S pre-initiation complex (43S PIC). The eIF-3 complex stimulates mRNA recruitment to the 43S PIC and scanning of the mRNA for AUG recognition. The eIF-3 complex is also required for disassembly and recycling of post-termination ribosomal complexes and subsequently prevents premature joining of the 40S and 60S ribosomal subunits prior to initiation. The eIF-3 complex specifically targets and initiates translation of a subset of mRNAs involved in cell proliferation, including cell cycling, differentiation and apoptosis, and uses different modes of RNA stem-loop binding to exert either translational activation or repression. The chain is Eukaryotic translation initiation factor 3 subunit L (Eif3l) from Mus musculus (Mouse).